The chain runs to 379 residues: UDP-4-amino-4-deoxy-L-arabinose--oxoglutarate aminotransferase (379 aa).

At Lys182 the chain carries N6-(pyridoxal phosphate)lysine.

It belongs to the DegT/DnrJ/EryC1 family. ArnB subfamily. As to quaternary structure, homodimer. Pyridoxal 5'-phosphate serves as cofactor.

It catalyses the reaction UDP-4-amino-4-deoxy-beta-L-arabinose + 2-oxoglutarate = UDP-beta-L-threo-pentopyranos-4-ulose + L-glutamate. It participates in nucleotide-sugar biosynthesis; UDP-4-deoxy-4-formamido-beta-L-arabinose biosynthesis; UDP-4-deoxy-4-formamido-beta-L-arabinose from UDP-alpha-D-glucuronate: step 2/3. It functions in the pathway bacterial outer membrane biogenesis; lipopolysaccharide biosynthesis. Its function is as follows. Catalyzes the conversion of UDP-4-keto-arabinose (UDP-Ara4O) to UDP-4-amino-4-deoxy-L-arabinose (UDP-L-Ara4N). The modified arabinose is attached to lipid A and is required for resistance to polymyxin and cationic antimicrobial peptides. This Shigella flexneri protein is UDP-4-amino-4-deoxy-L-arabinose--oxoglutarate aminotransferase.